A 479-amino-acid polypeptide reads, in one-letter code: Serralysin C (479 aa).

A propeptide spanning residues 1-17 (MGKNLSLRQDDAQHALS) is cleaved from the precursor. His188 is a Zn(2+) binding site. Glu189 is an active-site residue. His192 and Tyr228 together coordinate Zn(2+). 31 residues coordinate Ca(2+): Arg265, Gly267, Asp297, Gly299, Gly300, Asp302, Thr339, Glu341, Gly346, Gly348, Asp350, Asn355, Ala357, Asn359, Gly363, Gly364, Ala365, Gly366, Asp368, Gly372, Gly373, Gly375, Asp377, Gly381, Gly382, Ala383, Gly384, Asp386, Asp395, Asp402, and Asp412. Hemolysin-type calcium-binding repeat units follow at residues 344 to 361 (IGGS…DNIL), 362 to 379 (QGGA…ADTL), and 380 to 397 (YGGA…QDST).

The protein belongs to the peptidase M10B family. Ca(2+) is required as a cofactor. The cofactor is Zn(2+).

The protein resides in the secreted. The enzyme catalyses Preferential cleavage of bonds with hydrophobic residues in P1'.. The polypeptide is Serralysin C (prtC) (Dickeya chrysanthemi (Pectobacterium chrysanthemi)).